Here is a 148-residue protein sequence, read N- to C-terminus: Deoxyuridine 5'-triphosphate nucleotidohydrolase (148 aa).

Residues Arg-68–Gly-70, Asn-81, Thr-85–Asp-87, and Lys-95 contribute to the substrate site.

Belongs to the dUTPase family. Mg(2+) is required as a cofactor.

It carries out the reaction dUTP + H2O = dUMP + diphosphate + H(+). It functions in the pathway pyrimidine metabolism; dUMP biosynthesis; dUMP from dCTP (dUTP route): step 2/2. Its function is as follows. This enzyme is involved in nucleotide metabolism: it produces dUMP, the immediate precursor of thymidine nucleotides and it decreases the intracellular concentration of dUTP so that uracil cannot be incorporated into DNA. The protein is Deoxyuridine 5'-triphosphate nucleotidohydrolase of Rickettsia massiliae (strain Mtu5).